A 448-amino-acid chain; its full sequence is Glutamyl-tRNA reductase (448 aa).

Residues 49 to 52, Ser109, 114 to 116, and Gln120 contribute to the substrate site; these read TCNR and ETQ. The Nucleophile role is filled by Cys50. 189 to 194 lines the NADP(+) pocket; the sequence is GAGEMG.

This sequence belongs to the glutamyl-tRNA reductase family. In terms of assembly, homodimer.

The catalysed reaction is (S)-4-amino-5-oxopentanoate + tRNA(Glu) + NADP(+) = L-glutamyl-tRNA(Glu) + NADPH + H(+). It participates in porphyrin-containing compound metabolism; protoporphyrin-IX biosynthesis; 5-aminolevulinate from L-glutamyl-tRNA(Glu): step 1/2. Catalyzes the NADPH-dependent reduction of glutamyl-tRNA(Glu) to glutamate 1-semialdehyde (GSA). The polypeptide is Glutamyl-tRNA reductase (Staphylococcus epidermidis (strain ATCC 35984 / DSM 28319 / BCRC 17069 / CCUG 31568 / BM 3577 / RP62A)).